Here is a 256-residue protein sequence, read N- to C-terminus: Receptor expression-enhancing protein 3 (256 aa).

3 helical membrane-spanning segments follow: residues 1–21 (MVSW…YPAY), 42–62 (WIVF…IAWF), and 68–88 (IKIA…SVIY). Residues 177-256 (IMDQPDGAEY…NATTYSNMES (80 aa)) form a disordered region. Positions 247–256 (NATTYSNMES) are enriched in polar residues.

The protein belongs to the DP1 family.

The protein localises to the endoplasmic reticulum membrane. Functionally, microtubule-binding protein required to ensure proper cell division and nuclear envelope reassembly by sequestering the endoplasmic reticulum away from chromosomes during mitosis. Probably acts by clearing the endoplasmic reticulum membrane from metaphase chromosomes. This Danio rerio (Zebrafish) protein is Receptor expression-enhancing protein 3 (reep3).